A 322-amino-acid polypeptide reads, in one-letter code: 2-oxoglutarate-dependent dioxygenase caaD (322 aa).

The Fe2OG dioxygenase domain maps to 172–279 (TGNAAMFLKL…FAVPAFWHGD (108 aa)). Positions 200, 202, and 259 each coordinate Fe cation. Arginine 269 contributes to the 2-oxoglutarate binding site.

Belongs to the iron/ascorbate-dependent oxidoreductase family. The cofactor is Fe(2+).

The protein operates within secondary metabolite biosynthesis. 2-oxoglutarate-dependent dioxygenase; part of the gene cluster that produces the acyltetronic acid derivatives carlosic acid, agglomerin F and carlosic acid methyl ether. CaaD catalyzes the sequential oxidations of the terminal C-10 methyl group of the caaC product to form carboxylic acid which is necessary for the biosynthesis of agglomerin F. The chain is 2-oxoglutarate-dependent dioxygenase caaD from Aspergillus niger (strain ATCC MYA-4892 / CBS 513.88 / FGSC A1513).